The chain runs to 279 residues: Tryptophan synthase alpha chain (279 aa).

Residues E50 and D61 each act as proton acceptor in the active site.

The protein belongs to the TrpA family. As to quaternary structure, tetramer of two alpha and two beta chains.

It catalyses the reaction (1S,2R)-1-C-(indol-3-yl)glycerol 3-phosphate + L-serine = D-glyceraldehyde 3-phosphate + L-tryptophan + H2O. The protein operates within amino-acid biosynthesis; L-tryptophan biosynthesis; L-tryptophan from chorismate: step 5/5. Functionally, the alpha subunit is responsible for the aldol cleavage of indoleglycerol phosphate to indole and glyceraldehyde 3-phosphate. The protein is Tryptophan synthase alpha chain of Brucella abortus (strain S19).